The following is a 317-amino-acid chain: Multivesicular body subunit 12B (317 aa).

The disordered stretch occupies residues Met1–Thr49. Residues Pro13 to Gln22 show a composition bias toward pro residues. The MABP domain maps to Met45–Arg191. Ser99 carries the post-translational modification Phosphoserine. Phosphothreonine is present on residues Thr120, Thr202, and Thr203. Residues Pro193 to Pro218 form a disordered region. Residues Ser198 to Ala214 are compositionally biased toward low complexity. Ser222 carries the phosphoserine modification. Positions Met252–Ala301 constitute a UMA domain. The disordered stretch occupies residues Glu297–Ser317. A Phosphoserine modification is found at Ser307.

The protein belongs to the MVB12 family. As to quaternary structure, component of the ESCRT-I complex (endosomal sorting complex required for transport I) which consists of TSG101, VPS28, a VPS37 protein (VPS37A to -D) and MVB12A or MVB12B in a 1:1:1:1 stoichiometry. Interacts with TSG101; the association appears to be mediated by the TSG101-VPS37 binary subcomplex. Interacts with VPS28. Interacts with VPS37B; the association appears to be mediated by the TSG101-VPS37 binary subcomplex. Interacts with VPS37C; the association appears to be mediated by the TSG101-VPS37 binary subcomplex.

It localises to the endosome. The protein localises to the late endosome membrane. In terms of biological role, component of the ESCRT-I complex, a regulator of vesicular trafficking process. Required for the sorting of endocytic ubiquitinated cargos into multivesicular bodies. This Mus musculus (Mouse) protein is Multivesicular body subunit 12B (Mvb12b).